A 335-amino-acid polypeptide reads, in one-letter code: Dye-decolorizing peroxidase (335 aa).

Catalysis depends on D149, which acts as the Proton acceptor. H222 serves as a coordination point for heme. The segment at 312–335 (LPQAATPTLAAGSLSIGSLKGSPR) is targeting peptide.

This sequence belongs to the DyP-type peroxidase family. In terms of assembly, homotetramer, presumably also in the encapsulin nanocompartment. It depends on heme b as a cofactor.

It localises to the encapsulin nanocompartment. It carries out the reaction 2 a phenolic donor + H2O2 = 2 a phenolic radical donor + 2 H2O. Its function is as follows. Cargo of a type 1 encapsulin nanocompartment in situ; this cargo protects against oxidative stress at low pH. When expressed in the cytoplasm (absence of the encapsulin shell gene) it is almost as protective as the intact nanocompartment; its encapsulation has a modest yet significant effect on protection against oxidative stress at low pH. A heme-dependent peroxidase, it probably does not have deferrochelatase activity. Converts guaiacol and H2O2 to tetraguaiacol, also acts on 2,2'-azino-bis(3-ethylbenzothiazoline-6-sulfonic acid) (ABTS). Retains peroxidase activity when encapsulated but has a reduced set of substrates; acts on ABTS but not guaiacol. This Mycobacterium tuberculosis (strain ATCC 25618 / H37Rv) protein is Dye-decolorizing peroxidase.